A 70-amino-acid chain; its full sequence is Large ribosomal subunit protein bL31 (70 aa).

An N6-acetyllysine modification is found at Lys-8. Zn(2+)-binding residues include Cys-16, Cys-18, Cys-37, and Cys-40.

Belongs to the bacterial ribosomal protein bL31 family. Type A subfamily. As to quaternary structure, part of the 50S ribosomal subunit. It depends on Zn(2+) as a cofactor.

Binds the 23S rRNA. The protein is Large ribosomal subunit protein bL31 of Escherichia coli O6:K15:H31 (strain 536 / UPEC).